Consider the following 141-residue polypeptide: Large ribosomal subunit protein bL17 (141 aa).

The protein belongs to the bacterial ribosomal protein bL17 family. As to quaternary structure, part of the 50S ribosomal subunit. Contacts protein L32.

This Agrobacterium fabrum (strain C58 / ATCC 33970) (Agrobacterium tumefaciens (strain C58)) protein is Large ribosomal subunit protein bL17.